The chain runs to 219 residues: MSALRLRNANTPAPELDELSDQTPSESRVLKRQMSMSQRAMSNTLTSAANLSNLLPTGTLLAFQLLTPVFTSNGVCDHATRFLTAVLLFLLAASCFVSSFTDSVKADDGTIYFGFVTFKGMWVVDYPDPSGLGLPDLAKYRMRFVDWIHATLSVLVFGAVALRDKYITDCFYPSPEAETKHVLDIVPVGVGVMCSLLFMVFPARRHGIGYLVTGSVDRR.

A disordered region spans residues 1-24 (MSALRLRNANTPAPELDELSDQTP). The next 4 membrane-spanning stretches (helical) occupy residues 51 to 71 (LSNLLPTGTLLAFQLLTPVFT), 82 to 102 (FLTAVLLFLLAASCFVSSFTD), 142 to 162 (MRFVDWIHATLSVLVFGAVAL), and 182 to 202 (VLDIVPVGVGVMCSLLFMVFP).

The protein belongs to the plant DMP1 protein family.

The protein localises to the endoplasmic reticulum membrane. In terms of biological role, involved in membrane remodeling. The sequence is that of Protein DMP5 from Arabidopsis thaliana (Mouse-ear cress).